A 347-amino-acid chain; its full sequence is Adenine deaminase (347 aa).

3 residues coordinate Zn(2+): histidine 16, histidine 18, and histidine 204. Glutamate 207 acts as the Proton donor in catalysis. Residue aspartate 285 coordinates Zn(2+). Aspartate 286 lines the substrate pocket.

Belongs to the metallo-dependent hydrolases superfamily. Adenosine and AMP deaminases family. Adenine deaminase type 2 subfamily. It depends on Zn(2+) as a cofactor. In terms of processing, probably ubiquitinated when cells enter quiescence in response to nutrient limitation, since it is specifically degraded via a process requiring the F-box protein SAF1 and components of the SKP1-Cullin-F-box complex.

The protein resides in the cytoplasm. Its subcellular location is the nucleus. It carries out the reaction adenine + H2O + H(+) = hypoxanthine + NH4(+). In terms of biological role, catalyzes the hydrolytic deamination of adenine to hypoxanthine. Plays an important role in the purine salvage pathway and in nitrogen catabolism. Also exhibits a low activity towards N(6)-substituted adenines that are commonly known as the plant hormones cytokinins. The sequence is that of Adenine deaminase from Saccharomyces cerevisiae (strain ATCC 204508 / S288c) (Baker's yeast).